Consider the following 545-residue polypeptide: Thermosome subunit (545 aa).

The protein belongs to the TCP-1 chaperonin family. Forms an oligomeric complex of eight-membered rings.

Molecular chaperone; binds unfolded polypeptides in vitro, and has a weak ATPase activity. This chain is Thermosome subunit (ths), found in Desulfurococcus sp. (strain SY).